The primary structure comprises 185 residues: Ribosome-recycling factor (185 aa).

The protein belongs to the RRF family.

It localises to the cytoplasm. Its function is as follows. Responsible for the release of ribosomes from messenger RNA at the termination of protein biosynthesis. May increase the efficiency of translation by recycling ribosomes from one round of translation to another. This chain is Ribosome-recycling factor, found in Aromatoleum aromaticum (strain DSM 19018 / LMG 30748 / EbN1) (Azoarcus sp. (strain EbN1)).